A 71-amino-acid polypeptide reads, in one-letter code: Large ribosomal subunit protein uL29 (71 aa).

Belongs to the universal ribosomal protein uL29 family.

The polypeptide is Large ribosomal subunit protein uL29 (Synechococcus sp. (strain RCC307)).